Reading from the N-terminus, the 370-residue chain is Pyruvate dehydrogenase E1 component subunit alpha (370 aa).

As to quaternary structure, heterodimer of an alpha and a beta chain. The cofactor is thiamine diphosphate.

The enzyme catalyses N(6)-[(R)-lipoyl]-L-lysyl-[protein] + pyruvate + H(+) = N(6)-[(R)-S(8)-acetyldihydrolipoyl]-L-lysyl-[protein] + CO2. In terms of biological role, the pyruvate dehydrogenase complex catalyzes the overall conversion of pyruvate to acetyl-CoA and CO(2). It contains multiple copies of three enzymatic components: pyruvate dehydrogenase (E1), dihydrolipoamide acetyltransferase (E2) and lipoamide dehydrogenase (E3). The sequence is that of Pyruvate dehydrogenase E1 component subunit alpha (pdhA) from Staphylococcus aureus (strain COL).